Here is a 445-residue protein sequence, read N- to C-terminus: ATP-dependent RNA helicase DBP8 (445 aa).

The short motif at 1–29 is the Q motif element; sequence MSFEDLGVSRWLSEALAAMKIHTPTAIQS. In terms of domain architecture, Helicase ATP-binding spans 32–208; it reads IPKILSGHDC…EKPPAQGKPP (177 aa). 45–52 provides a ligand contact to ATP; it reads AKTGSGKT. A DEAD box motif is present at residues 154-157; it reads DEAD. The region spanning 247–387 is the Helicase C-terminal domain; it reads RLPQYEKSTA…LLEEVTDDSV (141 aa). The segment at 408–445 is disordered; the sequence is KENFGEKRKINRKKRGLETEKIRVVKSKKEKSKKSLRQ. A compositionally biased stretch (basic residues) spans 431–445; sequence VVKSKKEKSKKSLRQ.

It belongs to the DEAD box helicase family. DDX49/DBP8 subfamily.

Its subcellular location is the nucleus. The protein resides in the nucleolus. It catalyses the reaction ATP + H2O = ADP + phosphate + H(+). ATP-binding RNA helicase involved in 40S ribosomal subunit biogenesis and is required for the normal formation of 18S rRNAs through pre-rRNA processing at A0, A1 and A2 sites. Required for vegetative growth. The chain is ATP-dependent RNA helicase DBP8 (DBP8) from Scheffersomyces stipitis (strain ATCC 58785 / CBS 6054 / NBRC 10063 / NRRL Y-11545) (Yeast).